Consider the following 188-residue polypeptide: Ribosome-recycling factor (188 aa).

The protein belongs to the RRF family.

It localises to the cytoplasm. Its function is as follows. Responsible for the release of ribosomes from messenger RNA at the termination of protein biosynthesis. May increase the efficiency of translation by recycling ribosomes from one round of translation to another. This chain is Ribosome-recycling factor, found in Bradyrhizobium diazoefficiens (strain JCM 10833 / BCRC 13528 / IAM 13628 / NBRC 14792 / USDA 110).